Reading from the N-terminus, the 468-residue chain is Beta-monoglucosyldiacylglycerol synthase (468 aa).

A run of 4 helical transmembrane segments spans residues 51–71, 72–92, 361–381, and 387–407; these read AALV…VSWG, SIFI…VVFA, FMLT…MAVV, and MLGP…FAGL.

It belongs to the glycosyltransferase 2 family. Requires Mg(2+) as cofactor.

The protein localises to the membrane. The catalysed reaction is a 1,2-diacyl-sn-glycerol + UDP-alpha-D-glucose = a 1,2-diacyl-3-O-(beta-D-glucopyranosyl)-sn-glycerol + UDP + H(+). Functionally, glucosyltransferase involved in the biosynthesis of the non-bilayer-forming membrane lipid beta-monoglucosyldiacylglycerol which contributes to regulate the properties and stability of the membrane. Catalyzes the transfer of a glucosyl residue from UDP-Glc to diacylglycerol (DAG) acceptor to form the corresponding beta-glucosyl-DAG (1,2-diacyl-3-O-(beta-D-glucopyranosyl)-sn-glycerol). It can only use UDP-Glc as sugar donor. The protein is Beta-monoglucosyldiacylglycerol synthase of Trichormus variabilis (strain ATCC 29413 / PCC 7937) (Anabaena variabilis).